A 327-amino-acid polypeptide reads, in one-letter code: Vacuolar protein sorting-associated protein 26A (327 aa).

The segment at 306-327 is disordered; it reads RTNFHQRFESPESQASAEQPEM. Phosphoserine is present on Ser-315. Polar residues predominate over residues 316–327; it reads PESQASAEQPEM.

This sequence belongs to the VPS26 family. As to quaternary structure, component of the heterotrimeric retromer cargo-selective complex (CSC), also described as vacuolar protein sorting subcomplex (VPS), formed by VPS26 (VPS26A or VPS26B), VPS29 and VPS35. The CSC has a highly elongated structure with VPS26 and VPS29 binding independently at opposite distal ends of VPS35 as central platform. The CSC is believed to associate with variable sorting nexins to form functionally distinct retromer complex variants. The originally described retromer complex (also called SNX-BAR retromer) is a pentamer containing the CSC and a heterodimeric membrane-deforming subcomplex formed between SNX1 or SNX2 and SNX5 or SNX6 (also called SNX-BAR subcomplex); the respective CSC and SNX-BAR subcomplexes associate with low affinity. The CSC associates with SNX3 to form a SNX3-retromer complex. The CSC associates with SNX27, the WASH complex and the SNX-BAR subcomplex to form the SNX27-retromer complex. Interacts with VPS29, VPS35, SNX27, SNX1, SNX2, SNX5, SNX6, SNX3, RAB7A, ECPAS, EHD1, WASHC5, SORL1.

It localises to the cytoplasm. Its subcellular location is the endosome membrane. It is found in the early endosome. Its function is as follows. Acts as a component of the retromer cargo-selective complex (CSC). The CSC is believed to be the core functional component of retromer or respective retromer complex variants acting to prevent missorting of selected transmembrane cargo proteins into the lysosomal degradation pathway. The recruitment of the CSC to the endosomal membrane involves RAB7A and SNX3. The SNX-BAR retromer mediates retrograde transport of cargo proteins from endosomes to the trans-Golgi network (TGN) and is involved in endosome-to-plasma membrane transport for cargo protein recycling. The SNX3-retromer mediates the retrograde endosome-to-TGN transport of WLS distinct from the SNX-BAR retromer pathway. The SNX27-retromer is believed to be involved in endosome-to-plasma membrane trafficking and recycling of a broad spectrum of cargo proteins. The CSC complex seems to act as recruitment hub for other proteins, such as the WASH complex and TBC1D5. Required for retrograde transport of lysosomal enzyme receptor IGF2R. Required to regulate transcytosis of the polymeric immunoglobulin receptor (pIgR-pIgA). Required for the endosomal localization of WASHC2 (indicative for the WASH complex). Required for the endosomal localization of TBC1D5. Mediates retromer cargo recognition of SORL1 and is involved in trafficking of SORL1 implicated in sorting and processing of APP. Involved in retromer-independent lysosomal sorting of F2R. Involved in recycling of ADRB2. Acts redundantly with VSP26B in SNX-27 mediated endocytic recycling of SLC2A1/GLUT1. Enhances the affinity of SNX27 for PDZ-binding motifs in cargo proteins. This is Vacuolar protein sorting-associated protein 26A (VPS26A) from Bos taurus (Bovine).